The following is a 288-amino-acid chain: Glucose uptake protein GlcU (288 aa).

A run of 10 helical transmembrane segments spans residues 4-26 (LIALLPALFWGSVVLINVLVGGG), 33-51 (GTTFGALIIGIILLLTGNA), 56-75 (LTIIIVGLISGAFWALGQGY), 82-104 (LIGVSKTMPISTGLQLVGTTLFS), 114-136 (GVQVTLGLVAMVLLVIGIALTSI), 148-170 (NFGKAMPILLISTVGYVVYVVVA), 180-197 (ALFFQSIGMAIGGLILSA), 206-225 (TLWNLIPGIVWGIGNLFMFY), 230-252 (VGVATSFSFSQLLVIVSTLGGIF), and 264-283 (IGIWAGIVLIVIAPLYSEIL).

It belongs to the GRP transporter (TC 2.A.7.5) family.

Its subcellular location is the cell membrane. In terms of biological role, involved in the uptake of glucose. The polypeptide is Glucose uptake protein GlcU (glcU) (Staphylococcus xylosus).